We begin with the raw amino-acid sequence, 478 residues long: MASKRLGFVVVLALVCQHINAFPTPAGPDDKYNRELTEEKPLEQQIAEADSIRKTESKPTPPAEEETNSEDDDITFLKALAEKSKESNNETPISDSANERLGADDTDSTKNRRLADDYDSTKNGMDYKYQDDPESFRQLDGTPLTAQDIVQKIANKIYEEDDRGVFDRIVSKLLKLGLITDSQAETLEYEVAEALQDLITKNAKDNMIGDRSVDYPVSAAKDTQDEEDRPSPRFDEEDEVENEGGDDANGDEPQEEESRDDTVRSDDSWDAVSDGNDRNELNPEDGLQDLQFFPNFYRLLKSLDSEQDKEERETLITIMKTLIDFVKMMVKYGTITPEEGVTYLENLDAMIALQTKNKLGKSLVPLSITPPTGKAADDDDNTKTEAAKMQKEYESLKDSTKDVQTAAEISHPGKSESYLEAIRKNIEWLKKHNKEGNKEDYDLSKLRDFMDQQVDSYIDKGILEKDEGDVIKRIYGSL.

An N-terminal signal peptide occupies residues Met-1 to Ala-21. Disordered stretches follow at residues Phe-22–Asp-126 and Ile-208–Leu-287. A compositionally biased stretch (basic and acidic residues) spans Pro-28–Leu-42. A compositionally biased stretch (acidic residues) spans Ala-63 to Ile-74. Positions Ala-97–Ser-120 are enriched in basic and acidic residues. Acidic residues predominate over residues Asp-235 to Arg-259.

The protein localises to the cytoplasmic vesicle. The protein resides in the secretory vesicle lumen. Its subcellular location is the secretory vesicle membrane. It localises to the secreted. The chain is Secretogranin-3 (scg3) from Danio rerio (Zebrafish).